Consider the following 273-residue polypeptide: Ribosomal RNA small subunit methyltransferase A (273 aa).

Positions 18, 20, 45, 66, 91, and 113 each coordinate S-adenosyl-L-methionine.

Belongs to the class I-like SAM-binding methyltransferase superfamily. rRNA adenine N(6)-methyltransferase family. RsmA subfamily.

The protein resides in the cytoplasm. The catalysed reaction is adenosine(1518)/adenosine(1519) in 16S rRNA + 4 S-adenosyl-L-methionine = N(6)-dimethyladenosine(1518)/N(6)-dimethyladenosine(1519) in 16S rRNA + 4 S-adenosyl-L-homocysteine + 4 H(+). Functionally, specifically dimethylates two adjacent adenosines (A1518 and A1519) in the loop of a conserved hairpin near the 3'-end of 16S rRNA in the 30S particle. May play a critical role in biogenesis of 30S subunits. The chain is Ribosomal RNA small subunit methyltransferase A from Shigella dysenteriae serotype 1 (strain Sd197).